The following is a 335-amino-acid chain: Ketol-acid reductoisomerase (NADP(+)) (335 aa).

The KARI N-terminal Rossmann domain occupies 5–185; it reads SKIYTDKDSN…GATRAGVIPT (181 aa). Residues 28–31, S56, and 86–89 each bind NADP(+); these read YGSQ and DMVQ. Residue H111 is part of the active site. G137 is a binding site for NADP(+). The KARI C-terminal knotted domain maps to 186–331; the sequence is TFKEETETDL…NQLKDLIQKG (146 aa). D194, E198, E230, and E234 together coordinate Mg(2+). S255 is a binding site for substrate.

This sequence belongs to the ketol-acid reductoisomerase family. It depends on Mg(2+) as a cofactor.

It catalyses the reaction (2R)-2,3-dihydroxy-3-methylbutanoate + NADP(+) = (2S)-2-acetolactate + NADPH + H(+). It carries out the reaction (2R,3R)-2,3-dihydroxy-3-methylpentanoate + NADP(+) = (S)-2-ethyl-2-hydroxy-3-oxobutanoate + NADPH + H(+). It participates in amino-acid biosynthesis; L-isoleucine biosynthesis; L-isoleucine from 2-oxobutanoate: step 2/4. It functions in the pathway amino-acid biosynthesis; L-valine biosynthesis; L-valine from pyruvate: step 2/4. Its function is as follows. Involved in the biosynthesis of branched-chain amino acids (BCAA). Catalyzes an alkyl-migration followed by a ketol-acid reduction of (S)-2-acetolactate (S2AL) to yield (R)-2,3-dihydroxy-isovalerate. In the isomerase reaction, S2AL is rearranged via a Mg-dependent methyl migration to produce 3-hydroxy-3-methyl-2-ketobutyrate (HMKB). In the reductase reaction, this 2-ketoacid undergoes a metal-dependent reduction by NADPH to yield (R)-2,3-dihydroxy-isovalerate. The polypeptide is Ketol-acid reductoisomerase (NADP(+)) (Saccharolobus islandicus (strain Y.G.57.14 / Yellowstone #1) (Sulfolobus islandicus)).